The chain runs to 528 residues: Phosphoenolpyruvate carboxykinase (ATP) (528 aa).

The substrate site is built by arginine 56, tyrosine 192, and lysine 198. Residues lysine 198, histidine 217, and 233-241 each bind ATP; that span reads GLSGTGKTT. Lysine 198 and histidine 217 together coordinate Mn(2+). Residue aspartate 254 coordinates Mn(2+). Residues glutamate 282, arginine 319, and threonine 444 each coordinate ATP. Residue arginine 319 coordinates substrate.

Belongs to the phosphoenolpyruvate carboxykinase (ATP) family. Mn(2+) serves as cofactor.

The protein resides in the cytoplasm. It carries out the reaction oxaloacetate + ATP = phosphoenolpyruvate + ADP + CO2. It participates in carbohydrate biosynthesis; gluconeogenesis. Functionally, involved in the gluconeogenesis. Catalyzes the conversion of oxaloacetate (OAA) to phosphoenolpyruvate (PEP) through direct phosphoryl transfer between the nucleoside triphosphate and OAA. The sequence is that of Phosphoenolpyruvate carboxykinase (ATP) from Geobacillus kaustophilus (strain HTA426).